A 336-amino-acid chain; its full sequence is Coproporphyrin III ferrochelatase (336 aa).

Fe-coproporphyrin III-binding residues include Ser-52 and Tyr-116. Fe(2+)-binding residues include His-172 and Glu-255.

The protein belongs to the ferrochelatase family.

The protein resides in the cytoplasm. It catalyses the reaction Fe-coproporphyrin III + 2 H(+) = coproporphyrin III + Fe(2+). The protein operates within porphyrin-containing compound metabolism; protoheme biosynthesis. Functionally, involved in coproporphyrin-dependent heme b biosynthesis. Catalyzes the insertion of ferrous iron into coproporphyrin III to form Fe-coproporphyrin III. The chain is Coproporphyrin III ferrochelatase from Mycobacterium avium (strain 104).